The primary structure comprises 272 residues: Sordarin/hypoxysordarin biosynthesis cluster protein P (272 aa).

N-linked (GlcNAc...) asparagine glycosylation is found at N6 and N23. The next 2 helical transmembrane spans lie at F31 to L51 and A67 to A87. N208 is a glycosylation site (N-linked (GlcNAc...) asparagine).

The protein resides in the membrane. The protein operates within antibiotic biosynthesis. Functionally, part of the gene cluster that mediates the biosynthesis of sordarin and hypoxysordarin, glycoside antibiotics with a unique tetracyclic diterpene aglycone structure. First, the geranylgeranyl diphosphate synthase sdnC constructs GGDP from farnesyl diphosphate and isopentenyl diphosphate. The diterpene cyclase sdnA then catalyzes the cyclization of GGDP to afford cycloaraneosene. Cycloaraneosene is then hydroxylated four times by the putative cytochrome P450 monooxygenases sdnB, sdnE, sdnF and sdnH to give a hydroxylated cycloaraneosene derivative such as cycloaraneosene-8,9,13,19-tetraol. Although the order of the hydroxylations is unclear, at least C8, C9 and C13 of the cycloaraneosene skeleton are hydroxylated before the sordaricin formation. Dehydration of the 13-hydroxy group of the hydroxylated cycloaraneosene derivative might be catalyzed by an unassigned hypothetical protein such as sdnG and sdnP to construct the cyclopentadiene moiety. The FAD-dependent oxidoreductase sdnN is proposed to catalyze the oxidation at C9 of the hydroxylated cycloaraneosene derivative and also catalyze the Baeyer-Villiger oxidation to give the lactone intermediate. The presumed lactone intermediate would be hydrolyzed to give an acrolein moiety and a carboxylate moiety. Then, [4+2]cycloaddition would occur between the acrolein moiety and the cyclopentadiene moiety to give sordaricin. SdnN might also be involved in the [4+2]cycloaddition after the hypothesized oxidation to accommodate the oxidized product and prompt the [4+2]cycloaddition. GDP-6-deoxy-D-altrose may be biosynthesized from GDP-D-mannose by the putative GDP-mannose-4,6-dehydratase sdnI and the short-chain dehydrogenase sdnK. The glycosyltransferase sdnJ catalyzes the attachment of 6-deoxy-D-altrose onto the 19-hydroxy group of sordaricin to give 4'-O-demethylsordarin. The methyltransferase sdnD would complete the biosynthesis of sordarin. Sordarin can be further modified into hypoxysordarin. The unique acyl chain at the 3'-hydroxy group of hypoxysordarin would be constructed by an iterative type I PKS sdnO and the trans-acting polyketide methyltransferase sdnL. SdnL would be responsible for the introduction of an alpha-methyl group of the polyketide chain. Alternatively, the beta-lactamase-like protein sdnR might be responsible for the cleavage and transfer of the polyketide chain from the PKS sdnO to sordarin. Two putative cytochrome P450 monooxygenases, sdnQ and sdnT, might catalyze the epoxidations of the polyketide chain to complete the biosynthesis of hypoxysordarin. Transcriptional regulators sdnM and sdnS are presumably encoded for the transcriptional regulation of the expression of the sdn gene cluster. In Sordaria araneosa (Pleurage araneosa), this protein is Sordarin/hypoxysordarin biosynthesis cluster protein P.